We begin with the raw amino-acid sequence, 258 residues long: 2-succinyl-6-hydroxy-2,4-cyclohexadiene-1-carboxylate synthase (258 aa).

This sequence belongs to the AB hydrolase superfamily. MenH family. Monomer.

The catalysed reaction is 5-enolpyruvoyl-6-hydroxy-2-succinyl-cyclohex-3-ene-1-carboxylate = (1R,6R)-6-hydroxy-2-succinyl-cyclohexa-2,4-diene-1-carboxylate + pyruvate. Its pathway is quinol/quinone metabolism; 1,4-dihydroxy-2-naphthoate biosynthesis; 1,4-dihydroxy-2-naphthoate from chorismate: step 3/7. The protein operates within quinol/quinone metabolism; menaquinone biosynthesis. In terms of biological role, catalyzes a proton abstraction reaction that results in 2,5-elimination of pyruvate from 2-succinyl-5-enolpyruvyl-6-hydroxy-3-cyclohexene-1-carboxylate (SEPHCHC) and the formation of 2-succinyl-6-hydroxy-2,4-cyclohexadiene-1-carboxylate (SHCHC). The polypeptide is 2-succinyl-6-hydroxy-2,4-cyclohexadiene-1-carboxylate synthase (Enterobacter sp. (strain 638)).